Here is a 366-residue protein sequence, read N- to C-terminus: S-adenosylmethionine:tRNA ribosyltransferase-isomerase (366 aa).

It belongs to the QueA family. Monomer.

It is found in the cytoplasm. It carries out the reaction 7-aminomethyl-7-carbaguanosine(34) in tRNA + S-adenosyl-L-methionine = epoxyqueuosine(34) in tRNA + adenine + L-methionine + 2 H(+). It participates in tRNA modification; tRNA-queuosine biosynthesis. In terms of biological role, transfers and isomerizes the ribose moiety from AdoMet to the 7-aminomethyl group of 7-deazaguanine (preQ1-tRNA) to give epoxyqueuosine (oQ-tRNA). In Methylorubrum populi (strain ATCC BAA-705 / NCIMB 13946 / BJ001) (Methylobacterium populi), this protein is S-adenosylmethionine:tRNA ribosyltransferase-isomerase.